Reading from the N-terminus, the 168-residue chain is uncharacterized protein (168 aa).

A signal peptide (or 19) is located at residues 1-21; sequence MKLLKALAVLSLATISSHSFA.

This is an uncharacterized protein from Haemophilus influenzae (strain ATCC 51907 / DSM 11121 / KW20 / Rd).